We begin with the raw amino-acid sequence, 45 residues long: Large ribosomal subunit protein bL34 (45 aa).

Residues methionine 1–valine 45 are disordered. A compositionally biased stretch (basic residues) spans serine 10–valine 45.

This sequence belongs to the bacterial ribosomal protein bL34 family.

The chain is Large ribosomal subunit protein bL34 from Prochlorococcus marinus (strain NATL2A).